The chain runs to 131 residues: Small ribosomal subunit protein uS11 (131 aa).

It belongs to the universal ribosomal protein uS11 family. Part of the 30S ribosomal subunit. Interacts with proteins S7 and S18. Binds to IF-3.

Located on the platform of the 30S subunit, it bridges several disparate RNA helices of the 16S rRNA. Forms part of the Shine-Dalgarno cleft in the 70S ribosome. The polypeptide is Small ribosomal subunit protein uS11 (Helicobacter acinonychis (strain Sheeba)).